The following is a 923-amino-acid chain: Alanine--tRNA ligase (923 aa).

4 residues coordinate Zn(2+): His-611, His-615, Cys-714, and His-718. Over residues 886–903 the composition is skewed to gly residues; that stretch reads VGGGGGGRPNMARGGGTD. A disordered region spans residues 886-909; it reads VGGGGGGRPNMARGGGTDPSGMDN.

This sequence belongs to the class-II aminoacyl-tRNA synthetase family. Zn(2+) serves as cofactor.

It localises to the cytoplasm. The catalysed reaction is tRNA(Ala) + L-alanine + ATP = L-alanyl-tRNA(Ala) + AMP + diphosphate. In terms of biological role, catalyzes the attachment of alanine to tRNA(Ala) in a two-step reaction: alanine is first activated by ATP to form Ala-AMP and then transferred to the acceptor end of tRNA(Ala). Also edits incorrectly charged Ser-tRNA(Ala) and Gly-tRNA(Ala) via its editing domain. This chain is Alanine--tRNA ligase, found in Methanococcoides burtonii (strain DSM 6242 / NBRC 107633 / OCM 468 / ACE-M).